The chain runs to 232 residues: Biosynthetic peptidoglycan transglycosylase (232 aa).

Residues 14–34 traverse the membrane as a helical segment; the sequence is AAVALVLLYQLWIFAHVLWWI.

It belongs to the glycosyltransferase 51 family.

The protein localises to the cell inner membrane. It catalyses the reaction [GlcNAc-(1-&gt;4)-Mur2Ac(oyl-L-Ala-gamma-D-Glu-L-Lys-D-Ala-D-Ala)](n)-di-trans,octa-cis-undecaprenyl diphosphate + beta-D-GlcNAc-(1-&gt;4)-Mur2Ac(oyl-L-Ala-gamma-D-Glu-L-Lys-D-Ala-D-Ala)-di-trans,octa-cis-undecaprenyl diphosphate = [GlcNAc-(1-&gt;4)-Mur2Ac(oyl-L-Ala-gamma-D-Glu-L-Lys-D-Ala-D-Ala)](n+1)-di-trans,octa-cis-undecaprenyl diphosphate + di-trans,octa-cis-undecaprenyl diphosphate + H(+). It participates in cell wall biogenesis; peptidoglycan biosynthesis. Its function is as follows. Peptidoglycan polymerase that catalyzes glycan chain elongation from lipid-linked precursors. The protein is Biosynthetic peptidoglycan transglycosylase of Thiobacillus denitrificans (strain ATCC 25259 / T1).